The sequence spans 624 residues: Bifunctional protein ArgH (624 aa).

The segment at 1–466 (MALWGGRFSQ…QERDNAGVKV (466 aa)) is argininosuccinate lyase. The region spanning 464 to 614 (VKVRPARLTD…DEVALEVNLQ (151 aa)) is the N-acetyltransferase domain. The interval 467–624 (RPARLTDLDA…EQVIIKSSVA (158 aa)) is probable acetyltransferase.

The protein in the N-terminal section; belongs to the lyase 1 family. Argininosuccinate lyase subfamily.

It is found in the cytoplasm. It carries out the reaction 2-(N(omega)-L-arginino)succinate = fumarate + L-arginine. It functions in the pathway amino-acid biosynthesis; L-arginine biosynthesis; L-arginine from L-ornithine and carbamoyl phosphate: step 3/3. The protein is Bifunctional protein ArgH (argH) of Aliivibrio fischeri (strain ATCC 700601 / ES114) (Vibrio fischeri).